Here is a 68-residue protein sequence, read N- to C-terminus: Small ribosomal subunit protein bS21 (68 aa).

Residues 36 to 68 (YEKPSEKRARERAAAVRRSRKLERKRAERDGIR) form a disordered region. Residues 37–49 (EKPSEKRARERAA) are compositionally biased toward basic and acidic residues. A compositionally biased stretch (basic residues) spans 50–59 (AVRRSRKLER).

The protein belongs to the bacterial ribosomal protein bS21 family.

This is Small ribosomal subunit protein bS21 from Zymomonas mobilis subsp. mobilis (strain ATCC 31821 / ZM4 / CP4).